A 1387-amino-acid chain; its full sequence is Regulator of G-protein signaling 12 (1387 aa).

In terms of domain architecture, PDZ spans 21-97; sequence SVEVARGRAG…GVLRMVISEG (77 aa). Phosphoserine is present on residues serine 171 and serine 194. Residue lysine 195 forms a Glycyl lysine isopeptide (Lys-Gly) (interchain with G-Cter in SUMO2) linkage. A PID domain is found at 227 to 339; the sequence is VAMVVGYLGS…GALRTSCHVF (113 aa). Disordered regions lie at residues 409 to 428 and 442 to 488; these read ADAH…IGNF and LGGG…PLET. The segment covering 412-428 has biased composition (polar residues); the sequence is HQNNSTSSNSDSGIGNF. 2 positions are modified to omega-N-methylarginine: arginine 524 and arginine 633. Positions 620–650 are disordered; it reads RKTKEDKKSSKLGRGVALAQTSQRTSARRSF. 2 positions are modified to phosphoserine: serine 661 and serine 671. Residues 715-832 form the RGS domain; the sequence is SFERLLQDPV…LKSQLYQECV (118 aa). Residues 842-934 form a disordered region; it reads PDSQQVPSSP…ANGGLCRRES (93 aa). Positions 849–869 are enriched in low complexity; sequence SSPASKHSISSDHSNVSTPKK. A phosphoserine mark is found at serine 850 and serine 879. A compositionally biased stretch (basic and acidic residues) spans 914 to 923; it reads DHGDHAHDAL. Serine 943 carries the phosphoserine modification. RBD domains follow at residues 962-1032 and 1034-1104; these read KHCC…LGKR and LFRL…LEER. The span at 1103–1117 shows a compositional bias: basic and acidic residues; that stretch reads ERDPSRGKVSTEKQK. The segment at 1103 to 1168 is disordered; that stretch reads ERDPSRGKVS…ARDPRLSKRE (66 aa). Positions 1122–1133 are enriched in polar residues; the sequence is KQSSAVNSSPRN. The segment covering 1151–1168 has biased composition (basic and acidic residues); that stretch reads IRGENGKSARDPRLSKRE. In terms of domain architecture, GoLoco spans 1187–1209; the sequence is AEEFFELISKAQSNRADDQRGLL. 2 disordered regions span residues 1224–1325 and 1349–1387; these read PGSS…EGTT and ADLT…TSRF. Low complexity predominate over residues 1261–1280; that stretch reads SDSPATSPASAQSPCSAYSP. Polar residues predominate over residues 1315–1325; it reads SCISTVQEGTT. Pro residues predominate over residues 1367–1380; the sequence is LPPPPLPQDTPGPT.

As to quaternary structure, interacts with GNAI1, GNAI2 and GNAI3; the interactions are GDP-dependent. In terms of tissue distribution, detected in brain cortex GABAergic neurons, in striatum and substantia nigra, and in the Purkinje cell layer in the cerebellum and hippocampus (at protein level). Expressed at high levels in brain and lung and lower levels in testis, heart, and spleen.

Its subcellular location is the nucleus. It is found in the cytoplasm. It localises to the cell projection. The protein localises to the dendrite. The protein resides in the synapse. Functionally, regulates G protein-coupled receptor signaling cascades. Inhibits signal transduction by increasing the GTPase activity of G protein alpha subunits, thereby driving them into their inactive GDP-bound form. The polypeptide is Regulator of G-protein signaling 12 (Rgs12) (Rattus norvegicus (Rat)).